The following is a 196-amino-acid chain: uncharacterized protein (196 aa).

Residues 1-21 (MQPEVEPLISPNLGAPGSHRE) are disordered.

This is an uncharacterized protein from Mus musculus (Mouse).